Reading from the N-terminus, the 177-residue chain is ATP synthase subunit delta (177 aa).

The protein belongs to the ATPase delta chain family. In terms of assembly, F-type ATPases have 2 components, F(1) - the catalytic core - and F(0) - the membrane proton channel. F(1) has five subunits: alpha(3), beta(3), gamma(1), delta(1), epsilon(1). F(0) has three main subunits: a(1), b(2) and c(10-14). The alpha and beta chains form an alternating ring which encloses part of the gamma chain. F(1) is attached to F(0) by a central stalk formed by the gamma and epsilon chains, while a peripheral stalk is formed by the delta and b chains.

It is found in the cell inner membrane. Functionally, f(1)F(0) ATP synthase produces ATP from ADP in the presence of a proton or sodium gradient. F-type ATPases consist of two structural domains, F(1) containing the extramembraneous catalytic core and F(0) containing the membrane proton channel, linked together by a central stalk and a peripheral stalk. During catalysis, ATP synthesis in the catalytic domain of F(1) is coupled via a rotary mechanism of the central stalk subunits to proton translocation. In terms of biological role, this protein is part of the stalk that links CF(0) to CF(1). It either transmits conformational changes from CF(0) to CF(1) or is implicated in proton conduction. This Shigella flexneri protein is ATP synthase subunit delta.